The chain runs to 1097 residues: Protein STICHEL-like 3 (1097 aa).

Disordered stretches follow at residues 1 to 22, 74 to 168, 220 to 293, 321 to 358, and 400 to 436; these read MTTT…NNRI, SLRD…YRIG, NVRP…GFGE, GRSL…DSSS, and DSDL…LTEK. Positions 10–20 are enriched in polar residues; sequence RVASSSSTRNN. Residues 95 to 113 are compositionally biased toward basic and acidic residues; sequence LPKKGDLVEGGRRSVDLKK. The span at 126–136 shows a compositional bias: polar residues; it reads PVVNFGTSKVT. The segment covering 137–168 has biased composition (basic and acidic residues); the sequence is PSDERSGPVSGERDSGRRVKREESSRKSYRIG. Gly residues predominate over residues 227–241; the sequence is YGGGGGGGNTRGCAG. A compositionally biased stretch (basic residues) spans 245 to 259; that stretch reads RPKRRKFRGTRRVRG. Basic and acidic residues-rich tracts occupy residues 281 to 291 and 332 to 345; these read VEKHDGEKEGF and KGGR…RNGS. Positions 346–358 are enriched in low complexity; that stretch reads DKMMIQSDDDSSS. Over residues 411 to 429 the composition is skewed to basic residues; sequence EKKHKKKSHVNARHRHRQQ. 472–479 is a binding site for ATP; sequence GPNGTGKT. 4 residues coordinate Zn(2+): Cys491, Cys500, Cys503, and Cys506. Residues 742-770 adopt a coiled-coil conformation; it reads KEDMEKLRQALKTLSEAEKQLRVSNDKLT. 3 disordered regions span residues 790-828, 913-932, and 956-1003; these read SSTA…DSRK, DPRN…DKSL, and VTES…SQSI. 2 stretches are compositionally biased toward basic and acidic residues: residues 796–807 and 818–828; these read GGRESSDHHLDP and GLDRRRGDSRK. Over residues 993-1003 the composition is skewed to polar residues; that stretch reads ASQSQNQSQSI.

This sequence belongs to the DnaX/STICHEL family.

This chain is Protein STICHEL-like 3, found in Arabidopsis thaliana (Mouse-ear cress).